Reading from the N-terminus, the 189-residue chain is NADH-quinone oxidoreductase subunit B (189 aa).

Residues Cys-39, Cys-40, Cys-104, and Cys-135 each contribute to the [4Fe-4S] cluster site.

It belongs to the complex I 20 kDa subunit family. As to quaternary structure, NDH-1 is composed of 14 different subunits. Subunits NuoB, C, D, E, F, and G constitute the peripheral sector of the complex. It depends on [4Fe-4S] cluster as a cofactor.

The protein resides in the cell inner membrane. It catalyses the reaction a quinone + NADH + 5 H(+)(in) = a quinol + NAD(+) + 4 H(+)(out). Functionally, NDH-1 shuttles electrons from NADH, via FMN and iron-sulfur (Fe-S) centers, to quinones in the respiratory chain. The immediate electron acceptor for the enzyme in this species is believed to be a menaquinone. Couples the redox reaction to proton translocation (for every two electrons transferred, four hydrogen ions are translocated across the cytoplasmic membrane), and thus conserves the redox energy in a proton gradient. The chain is NADH-quinone oxidoreductase subunit B from Chlorobium limicola (strain DSM 245 / NBRC 103803 / 6330).